A 587-amino-acid polypeptide reads, in one-letter code: MSADSKVQLTALLRAALKSIAPELADTPIHLERPKQAGHGDFATNLALQLAKPLRRRPRELAELLLAELPRSTLVAATEVAGAGFINFTLAAGAKTAAVGTVLERGAEFGRGARNGTSVQLEFVSANPTGPLHVGHGRGAAYGASLAAVLDFAGSDVTREYYINDAGRQMDILALSTWLRYLALYGLDIPFPPNAYQGDYVVDMARAMREGHQDRFAGFTIEQVLEGAPGLPVAERKDDEAKTQREDHLDMLIANAKRLLGEDYHFVHGFALNEQLGDGRDDLEEFGVHFDKWFSEKSLFDTGLVDRAVAELEKRGHVYLQDGAKWFRSTAFGDEKDRVVQRENGLYTYFASDIAYHLNKYERGYDRIIDIWGADHHGYIPRVKGAIAALGLPPEKLEVALVQFAVLYRNGQKASMSTRSGEFVTLRELRREVGNDACRFFYVLRKSDQHLDFDLDLAKSQSNENPVYYVQYAHARVCSVLEQWGGEAAELRAAQLDLLGNERELALCARLGGFPELIQNAAADHAPHQIAFYLKDLAAEFHSWYNAERMLVDDPALRLARLALATAVRQVLATALALLGVSAPQSM.

The 'HIGH' region motif lies at 126–136 (ANPTGPLHVGH).

The protein belongs to the class-I aminoacyl-tRNA synthetase family. In terms of assembly, monomer.

Its subcellular location is the cytoplasm. The enzyme catalyses tRNA(Arg) + L-arginine + ATP = L-arginyl-tRNA(Arg) + AMP + diphosphate. The protein is Arginine--tRNA ligase of Aromatoleum aromaticum (strain DSM 19018 / LMG 30748 / EbN1) (Azoarcus sp. (strain EbN1)).